The sequence spans 225 residues: Uracil-DNA glycosylase (225 aa).

Aspartate 65 serves as the catalytic Proton acceptor.

It belongs to the uracil-DNA glycosylase (UDG) superfamily. UNG family.

The protein resides in the cytoplasm. The catalysed reaction is Hydrolyzes single-stranded DNA or mismatched double-stranded DNA and polynucleotides, releasing free uracil.. Its function is as follows. Excises uracil residues from the DNA which can arise as a result of misincorporation of dUMP residues by DNA polymerase or due to deamination of cytosine. The sequence is that of Uracil-DNA glycosylase from Bacillus cereus (strain G9842).